A 74-amino-acid chain; its full sequence is Conotoxin AbVII (74 aa).

An N-terminal signal peptide occupies residues 1-17; it reads VLIIAVLFLTACQLTTA. Residues 18–40 constitute a propeptide that is removed on maturation; it reads ETSSRGKQKHRALRSTDKNSRMT. Residues 19–41 are disordered; that stretch reads TSSRGKQKHRALRSTDKNSRMTK. 3 disulfide bridges follow: Cys-43–Cys-57, Cys-50–Cys-61, and Cys-56–Cys-68.

The protein belongs to the conotoxin O1 superfamily. Expressed by the venom duct.

It localises to the secreted. The chain is Conotoxin AbVII from Conus abbreviatus (Abbreviated cone).